The chain runs to 501 residues: Amidophosphoribosyltransferase (501 aa).

Cysteine 2 acts as the Nucleophile in catalysis. Residues 2–234 (CGIVGIVGKS…PGEAVYITEE (233 aa)) enclose the Glutamine amidotransferase type-2 domain. Residues threonine 303, aspartate 365, and aspartate 366 each contribute to the Mg(2+) site.

In the C-terminal section; belongs to the purine/pyrimidine phosphoribosyltransferase family. Mg(2+) serves as cofactor.

It carries out the reaction 5-phospho-beta-D-ribosylamine + L-glutamate + diphosphate = 5-phospho-alpha-D-ribose 1-diphosphate + L-glutamine + H2O. Its pathway is purine metabolism; IMP biosynthesis via de novo pathway; N(1)-(5-phospho-D-ribosyl)glycinamide from 5-phospho-alpha-D-ribose 1-diphosphate: step 1/2. Its function is as follows. Catalyzes the formation of phosphoribosylamine from phosphoribosylpyrophosphate (PRPP) and glutamine. The polypeptide is Amidophosphoribosyltransferase (Pseudomonas aeruginosa (strain ATCC 15692 / DSM 22644 / CIP 104116 / JCM 14847 / LMG 12228 / 1C / PRS 101 / PAO1)).